The primary structure comprises 188 residues: Selenoprotein S B (188 aa).

The helical transmembrane segment at 29-49 (EALSNYGWYILLGCIVIYFLI) threads the bilayer. Residues 116-125 (TWDRMQEGKS) show a composition bias toward basic and acidic residues. The interval 116-188 (TWDRMQEGKS…RGPSSGGSUG (73 aa)) is disordered. Residues 136–147 (ASPRTSTSSSAP) show a composition bias toward low complexity. A non-standard amino acid (selenocysteine) is located at residue selenocysteine 187.

The protein belongs to the selenoprotein S family.

Its subcellular location is the endoplasmic reticulum membrane. It localises to the cytoplasm. In terms of biological role, involved in the degradation process of misfolded endoplasmic reticulum (ER) luminal proteins. Participates in the transfer of misfolded proteins from the ER to the cytosol, where they are destroyed by the proteasome in a ubiquitin-dependent manner. This Xenopus laevis (African clawed frog) protein is Selenoprotein S B (vimp-b).